The chain runs to 150 residues: Monothiol glutaredoxin-5, mitochondrial (150 aa).

The transit peptide at 1–29 (MFLPKFNPIRSFSPILRAKTLLRYQNRMY) directs the protein to the mitochondrion. The Glutaredoxin domain maps to 35-140 (RKAIEDAIES…DLLEEAQALV (106 aa)). Glutathione is bound at residue K52. Position 60 (C60) interacts with [2Fe-2S] cluster. Glutathione-binding positions include 92–96 (REGIK), I104, and 117–118 (CD).

This sequence belongs to the glutaredoxin family. Monothiol subfamily. In terms of assembly, homodimer. Interacts with SSQ1. Interacts with BOL1.

Its subcellular location is the mitochondrion matrix. Functionally, monothiol glutaredoxin involved in mitochondrial iron-sulfur (Fe/S) cluster transfer. Receives 2Fe/2S clusters from scaffold protein ISU1 and mediates their transfer to apoproteins, to the 4Fe/FS cluster biosynthesis machinery, or export from mitochondrion. The polypeptide is Monothiol glutaredoxin-5, mitochondrial (Saccharomyces cerevisiae (strain ATCC 204508 / S288c) (Baker's yeast)).